A 148-amino-acid polypeptide reads, in one-letter code: Deoxyuridine 5'-triphosphate nucleotidohydrolase (148 aa).

Substrate is bound by residues 68-70, asparagine 81, 85-87, and lysine 95; these read RSG and TID.

This sequence belongs to the dUTPase family. Requires Mg(2+) as cofactor.

The enzyme catalyses dUTP + H2O = dUMP + diphosphate + H(+). Its pathway is pyrimidine metabolism; dUMP biosynthesis; dUMP from dCTP (dUTP route): step 2/2. In terms of biological role, this enzyme is involved in nucleotide metabolism: it produces dUMP, the immediate precursor of thymidine nucleotides and it decreases the intracellular concentration of dUTP so that uracil cannot be incorporated into DNA. The chain is Deoxyuridine 5'-triphosphate nucleotidohydrolase from Rickettsia peacockii (strain Rustic).